The sequence spans 314 residues: DNA-directed RNA polymerase subunit alpha (314 aa).

Residues 1–227 form an alpha N-terminal domain (alpha-NTD) region; it reads MIEFQKPTIS…EHLALFIDLS (227 aa). Residues 241-314 are alpha C-terminal domain (alpha-CTD); the sequence is VETVMENKEP…GQSFKQETEN (74 aa).

This sequence belongs to the RNA polymerase alpha chain family. Homodimer. The RNAP catalytic core consists of 2 alpha, 1 beta, 1 beta' and 1 omega subunit. When a sigma factor is associated with the core the holoenzyme is formed, which can initiate transcription.

The catalysed reaction is RNA(n) + a ribonucleoside 5'-triphosphate = RNA(n+1) + diphosphate. Functionally, DNA-dependent RNA polymerase catalyzes the transcription of DNA into RNA using the four ribonucleoside triphosphates as substrates. The protein is DNA-directed RNA polymerase subunit alpha of Oenococcus oeni (strain ATCC BAA-331 / PSU-1).